Consider the following 329-residue polypeptide: Glycerol-3-phosphate dehydrogenase [NAD(P)+] (329 aa).

Residues W11, R31, and K105 each coordinate NADPH. Positions 105, 135, and 137 each coordinate sn-glycerol 3-phosphate. A139 provides a ligand contact to NADPH. Sn-glycerol 3-phosphate is bound by residues K190, D243, S253, R254, and N255. The Proton acceptor role is filled by K190. Residue R254 coordinates NADPH. 2 residues coordinate NADPH: V277 and E279.

Belongs to the NAD-dependent glycerol-3-phosphate dehydrogenase family.

It localises to the cytoplasm. The enzyme catalyses sn-glycerol 3-phosphate + NAD(+) = dihydroxyacetone phosphate + NADH + H(+). It catalyses the reaction sn-glycerol 3-phosphate + NADP(+) = dihydroxyacetone phosphate + NADPH + H(+). It participates in membrane lipid metabolism; glycerophospholipid metabolism. Catalyzes the reduction of the glycolytic intermediate dihydroxyacetone phosphate (DHAP) to sn-glycerol 3-phosphate (G3P), the key precursor for phospholipid synthesis. In Maridesulfovibrio salexigens (strain ATCC 14822 / DSM 2638 / NCIMB 8403 / VKM B-1763) (Desulfovibrio salexigens), this protein is Glycerol-3-phosphate dehydrogenase [NAD(P)+].